Here is a 215-residue protein sequence, read N- to C-terminus: Deoxyribose-phosphate aldolase (215 aa).

D90 serves as the catalytic Proton donor/acceptor. The Schiff-base intermediate with acetaldehyde role is filled by K152. The active-site Proton donor/acceptor is K181.

It belongs to the DeoC/FbaB aldolase family. DeoC type 1 subfamily.

Its subcellular location is the cytoplasm. It catalyses the reaction 2-deoxy-D-ribose 5-phosphate = D-glyceraldehyde 3-phosphate + acetaldehyde. Its pathway is carbohydrate degradation; 2-deoxy-D-ribose 1-phosphate degradation; D-glyceraldehyde 3-phosphate and acetaldehyde from 2-deoxy-alpha-D-ribose 1-phosphate: step 2/2. Catalyzes a reversible aldol reaction between acetaldehyde and D-glyceraldehyde 3-phosphate to generate 2-deoxy-D-ribose 5-phosphate. The sequence is that of Deoxyribose-phosphate aldolase from Ureaplasma parvum serovar 3 (strain ATCC 27815 / 27 / NCTC 11736).